Consider the following 605-residue polypeptide: DNA mismatch repair protein MutL (605 aa).

It belongs to the DNA mismatch repair MutL/HexB family.

Its function is as follows. This protein is involved in the repair of mismatches in DNA. It is required for dam-dependent methyl-directed DNA mismatch repair. May act as a 'molecular matchmaker', a protein that promotes the formation of a stable complex between two or more DNA-binding proteins in an ATP-dependent manner without itself being part of a final effector complex. In Methylocella silvestris (strain DSM 15510 / CIP 108128 / LMG 27833 / NCIMB 13906 / BL2), this protein is DNA mismatch repair protein MutL.